A 260-amino-acid polypeptide reads, in one-letter code: uncharacterized protein (260 aa).

The signal sequence occupies residues 1-22; sequence MKSIKRIGLCISLLILIIFATS. A lipid anchor (N-palmitoyl cysteine) is attached at Cys23. Cys23 is lipidated: S-diacylglycerol cysteine.

It belongs to the staphylococcal tandem lipoprotein family.

The protein localises to the cell membrane. This is an uncharacterized protein from Staphylococcus aureus (strain N315).